Here is a 212-residue protein sequence, read N- to C-terminus: Leucyl/phenylalanyl-tRNA--protein transferase (212 aa).

This sequence belongs to the L/F-transferase family.

Its subcellular location is the cytoplasm. It catalyses the reaction N-terminal L-lysyl-[protein] + L-leucyl-tRNA(Leu) = N-terminal L-leucyl-L-lysyl-[protein] + tRNA(Leu) + H(+). It carries out the reaction N-terminal L-arginyl-[protein] + L-leucyl-tRNA(Leu) = N-terminal L-leucyl-L-arginyl-[protein] + tRNA(Leu) + H(+). The catalysed reaction is L-phenylalanyl-tRNA(Phe) + an N-terminal L-alpha-aminoacyl-[protein] = an N-terminal L-phenylalanyl-L-alpha-aminoacyl-[protein] + tRNA(Phe). In terms of biological role, functions in the N-end rule pathway of protein degradation where it conjugates Leu, Phe and, less efficiently, Met from aminoacyl-tRNAs to the N-termini of proteins containing an N-terminal arginine or lysine. The polypeptide is Leucyl/phenylalanyl-tRNA--protein transferase (Christiangramia forsetii (strain DSM 17595 / CGMCC 1.15422 / KT0803) (Gramella forsetii)).